Reading from the N-terminus, the 311-residue chain is N-acetyl-gamma-glutamyl-phosphate reductase (311 aa).

Cys-117 is a catalytic residue.

Belongs to the NAGSA dehydrogenase family. Type 2 subfamily.

The protein resides in the cytoplasm. The enzyme catalyses N-acetyl-L-glutamate 5-semialdehyde + phosphate + NADP(+) = N-acetyl-L-glutamyl 5-phosphate + NADPH + H(+). It participates in amino-acid biosynthesis; L-arginine biosynthesis; N(2)-acetyl-L-ornithine from L-glutamate: step 3/4. Its function is as follows. Catalyzes the NADPH-dependent reduction of N-acetyl-5-glutamyl phosphate to yield N-acetyl-L-glutamate 5-semialdehyde. In Brucella anthropi (strain ATCC 49188 / DSM 6882 / CCUG 24695 / JCM 21032 / LMG 3331 / NBRC 15819 / NCTC 12168 / Alc 37) (Ochrobactrum anthropi), this protein is N-acetyl-gamma-glutamyl-phosphate reductase.